Consider the following 521-residue polypeptide: Jacalin-related lectin 38 (521 aa).

In terms of domain architecture, F-box spans 2–48 (MQPDHDLPYDLEGEILSHLPIQILARFRCVCKRWNTLFKERRFFNSD). 3 Kelch repeats span residues 145–190 (KHYK…PYSV), 326–373 (YIYI…ITQH), and 486–521 (MSFV…SPLP). The region spanning 377–519 (SRFAPLRGIQ…LTAFGVHFSP (143 aa)) is the Jacalin-type lectin domain.

It belongs to the jacalin lectin family.

This Arabidopsis thaliana (Mouse-ear cress) protein is Jacalin-related lectin 38 (JAL38).